Consider the following 113-residue polypeptide: T cell receptor alpha variable 8-4 (113 aa).

An N-terminal signal peptide occupies residues Met1–Ala20. Positions Gln21 to Ser113 constitute an Ig-like domain. Residues Cys42 and Cys110 are joined by a disulfide bond. Asn43 is a glycosylation site (N-linked (GlcNAc...) asparagine).

As to quaternary structure, alpha-beta TR is a heterodimer composed of an alpha and beta chain; disulfide-linked. The alpha-beta TR is associated with the transmembrane signaling CD3 coreceptor proteins to form the TR-CD3 (TcR or TCR). The assembly of alpha-beta TR heterodimers with CD3 occurs in the endoplasmic reticulum where a single alpha-beta TR heterodimer associates with one CD3D-CD3E heterodimer, one CD3G-CD3E heterodimer and one CD247 homodimer forming a stable octameric structure. CD3D-CD3E and CD3G-CD3E heterodimers preferentially associate with TR alpha and TR beta chains, respectively. The association of the CD247 homodimer is the last step of TcR assembly in the endoplasmic reticulum and is required for transport to the cell surface.

The protein localises to the cell membrane. Its function is as follows. V region of the variable domain of T cell receptor (TR) alpha chain that participates in the antigen recognition. Alpha-beta T cell receptors are antigen specific receptors which are essential to the immune response and are present on the cell surface of T lymphocytes. Recognize peptide-major histocompatibility (MH) (pMH) complexes that are displayed by antigen presenting cells (APC), a prerequisite for efficient T cell adaptive immunity against pathogens. Binding of alpha-beta TR to pMH complex initiates TR-CD3 clustering on the cell surface and intracellular activation of LCK that phosphorylates the ITAM motifs of CD3G, CD3D, CD3E and CD247 enabling the recruitment of ZAP70. In turn ZAP70 phosphorylates LAT, which recruits numerous signaling molecules to form the LAT signalosome. The LAT signalosome propagates signal branching to three major signaling pathways, the calcium, the mitogen-activated protein kinase (MAPK) kinase and the nuclear factor-kappa-B (NF-kB) pathways, leading to the mobilization of transcription factors that are critical for gene expression and essential for T cell growth and differentiation. The T cell repertoire is generated in the thymus, by V-(D)-J rearrangement. This repertoire is then shaped by intrathymic selection events to generate a peripheral T cell pool of self-MH restricted, non-autoaggressive T cells. Post-thymic interaction of alpha-beta TR with the pMH complexes shapes TR structural and functional avidity. This Homo sapiens (Human) protein is T cell receptor alpha variable 8-4.